The primary structure comprises 97 residues: Co-chaperonin GroES (97 aa).

The protein belongs to the GroES chaperonin family. Heptamer of 7 subunits arranged in a ring. Interacts with the chaperonin GroEL.

The protein resides in the cytoplasm. Its function is as follows. Together with the chaperonin GroEL, plays an essential role in assisting protein folding. The GroEL-GroES system forms a nano-cage that allows encapsulation of the non-native substrate proteins and provides a physical environment optimized to promote and accelerate protein folding. GroES binds to the apical surface of the GroEL ring, thereby capping the opening of the GroEL channel. This Pseudomonas fluorescens (strain Pf0-1) protein is Co-chaperonin GroES.